Here is a 502-residue protein sequence, read N- to C-terminus: Probable cytosol aminopeptidase (502 aa).

Residues Lys265 and Asp270 each coordinate Mn(2+). The active site involves Lys277. Residues Asp288, Asp347, and Glu349 each contribute to the Mn(2+) site. The active site involves Arg351.

This sequence belongs to the peptidase M17 family. It depends on Mn(2+) as a cofactor.

The protein resides in the cytoplasm. The enzyme catalyses Release of an N-terminal amino acid, Xaa-|-Yaa-, in which Xaa is preferably Leu, but may be other amino acids including Pro although not Arg or Lys, and Yaa may be Pro. Amino acid amides and methyl esters are also readily hydrolyzed, but rates on arylamides are exceedingly low.. It carries out the reaction Release of an N-terminal amino acid, preferentially leucine, but not glutamic or aspartic acids.. Presumably involved in the processing and regular turnover of intracellular proteins. Catalyzes the removal of unsubstituted N-terminal amino acids from various peptides. This chain is Probable cytosol aminopeptidase, found in Rickettsia bellii (strain OSU 85-389).